A 171-amino-acid polypeptide reads, in one-letter code: MLP-like protein 31 (171 aa).

Belongs to the MLP family.

This is MLP-like protein 31 (MLP31) from Arabidopsis thaliana (Mouse-ear cress).